We begin with the raw amino-acid sequence, 300 residues long: Geranyl diphosphate 2-C-methyltransferase (300 aa).

The tract at residues methionine 1–alanine 24 is disordered.

This sequence belongs to the geranyl diphosphate 2-C-methyltransferase family. Mg(2+) is required as a cofactor.

The catalysed reaction is (2E)-geranyl diphosphate + S-adenosyl-L-methionine = (E)-2-methylgeranyl diphosphate + S-adenosyl-L-homocysteine + H(+). Its function is as follows. Catalyzes the SAM-dependent methylation of geranyl diphosphate (GPP) to yield (E)-2-methylgeranyl diphosphate (2-MeGPP). The polypeptide is Geranyl diphosphate 2-C-methyltransferase (gdpmt) (Streptomyces lasalocidi (Streptomyces lasaliensis)).